Consider the following 216-residue polypeptide: Probable nicotinate-nucleotide adenylyltransferase (216 aa).

It belongs to the NadD family.

It carries out the reaction nicotinate beta-D-ribonucleotide + ATP + H(+) = deamido-NAD(+) + diphosphate. It functions in the pathway cofactor biosynthesis; NAD(+) biosynthesis; deamido-NAD(+) from nicotinate D-ribonucleotide: step 1/1. Functionally, catalyzes the reversible adenylation of nicotinate mononucleotide (NaMN) to nicotinic acid adenine dinucleotide (NaAD). This Shewanella pealeana (strain ATCC 700345 / ANG-SQ1) protein is Probable nicotinate-nucleotide adenylyltransferase.